Consider the following 1380-residue polypeptide: Mitogen-activated protein kinase kinase kinase 5 (1380 aa).

Residues C30 to R97 are disordered. A compositionally biased stretch (low complexity) spans A37 to L49. Pro residues predominate over residues L50 to G59. Asymmetric dimethylarginine is present on residues R85 and R87. Residue S90 is modified to Phosphoserine; by PIM1 and PKB/AKT1. Residues H649 to I1374 form an interaction with PPIA/CYPA region. One can recognise a Protein kinase domain in the interval N687 to L945. ATP-binding positions include L693–V701 and K716. The residue at position 725 (Y725) is a Phosphotyrosine. The Proton acceptor role is filled by D810. T820 is subject to Phosphothreonine; by autocatalysis. At T845 the chain carries Phosphothreonine; by autocatalysis, MELK and MAP3K6. The residue at position 849 (T849) is a Phosphothreonine; by autocatalysis. At S965 the chain carries Phosphoserine. Position 973 is a phosphoserine; by autocatalysis (S973). Residues S1036 and S1040 each carry the phosphoserine modification. The segment at A1188–R1215 is disordered. A compositionally biased stretch (acidic residues) spans D1192–E1206. Residues L1252–K1292 adopt a coiled-coil conformation.

The protein belongs to the protein kinase superfamily. STE Ser/Thr protein kinase family. MAP kinase kinase kinase subfamily. As to quaternary structure, homodimer when inactive. Binds both upstream activators and downstream substrates in multimolecular complexes. Part of a cytoplasmic complex made of HIPK1, DAB2IP and MAP3K5 in response to TNF. This complex formation promotes MAP3K5-JNK activation and subsequent apoptosis. Interacts with SOCS1 which recognizes phosphorylation of Tyr-725 and induces MAP3K5/ASK1 degradation in endothelial cells. Interacts with the 14-3-3 family proteins such as YWHAB, YWHAE, YWHAQ, YWHAH, YWHAZ and SFN. Interacts with ARRB2, BIRC2, DAB2IP, IGF1R, MAP3K6/ASK2, PIM1, PGAM5, SOCS1, STUB1, TRAF2 and TXN. Interacts with ERN1 in a TRAF2-dependent manner. Interacts with calcineurin subunit PPP3R1, PPP5C, PPM1L and TRAF6. Interacts (via N-terminus) with RAF1 and this interaction inhibits the proapoptotic function of MAP3K5. Interacts with DAB2IP (via N-terminus C2 domain); the interaction occurs in a TNF-alpha-dependent manner. Interacts with DUSP13A; may positively regulate apoptosis. Interacts with PPIA/CYPA. Interacts with PRMT1; the interaction results in MAP3K5 methylation by PRMT1 which inhibits MAP3K5 activation. Interacts with TRAF2; the interaction is inhibited by PRMT1. Interacts with TRIM48. Mg(2+) serves as cofactor. Ser-90 and Ser-1040 are inactivating phosphorylation sites, the former of which is phosphorylated by AKT1. Phosphorylated at Ser-973 which induces association of MAP3K5/ASK1 with the 14-3-3 family proteins and suppresses MAP3K5/ASK1 activity. Calcineurin (CN) dephosphorylates this site. Also dephosphorylated and activated by PGAM5. Phosphorylated at Thr-845 through autophosphorylation and by MAP3K6/ASK2 which leads to activation. Thr-845 is dephosphorylated by PPP5C. Phosphorylation at Ser-973 in response to oxidative stress is negatively regulated by PPIA/CYPA. Post-translationally, ubiquitinated. Tumor necrosis factor (TNF) induces TNFR2-dependent ubiquitination, leading to proteasomal degradation. Ubiquitinated by RC3H2 in a TRIM48-dependent manner. In terms of processing, methylation at Arg-85 and Arg-87 by PRMT1 promotes association of MAP3K5 with thioredoxin and negatively regulates MAP3K5 association with TRAF2, inhibiting MAP3K5 activation. Methylation is blocked by ubiquitination of PRMT1 by TRIM48. Expressed in various adult mouse tissues including heart, brain, lung, liver and kidney.

It is found in the cytoplasm. It localises to the endoplasmic reticulum. It catalyses the reaction L-seryl-[protein] + ATP = O-phospho-L-seryl-[protein] + ADP + H(+). The enzyme catalyses L-threonyl-[protein] + ATP = O-phospho-L-threonyl-[protein] + ADP + H(+). Activated by various stressors, including oxidative stress, endoplasmic reticulum stress, and calcium overload, as well as by receptor-mediated inflammatory signals, such as the tumor necrosis factor (TNF) and lipopolysaccharide (LPS). Homophilic association of MAP3K5/ASK1 through the C-terminal coiled-coil domains and the heteromeric complex formation of MAP3K5/ASK1 with the reduced form of thioredoxin (TXN), constitutes an inactive form of the kinase. Upon ROS-induced dissociation of TXN from MAP3K5/ASK1, TRAF2 and TRAF6 are reciprocally recruited to MAP3K5/ASK1 and form the active MAP3K5/ASK1 signalosome, in which TRAF2 and TRAF6 appear to facilitate the active configuration of MAP3K5/ASK1. MAP3K5/ASK1 activity is also regulated through several phosphorylation and dephosphorylation events. Thr-845 is an activating phosphorylation site that is autophosphorylated and phosphorylated by MAP3K6/ASK2 and dephosphorylated by PPP5C. Ser-90 and Ser-1040 are inactivating phosphorylation sites, the former of which is phosphorylated by AKT1. Phosphorylation of Ser-973 induces association of MAP3K5/ASK1 with the 14-3-3 family proteins, which suppresses MAP3K5/ASK1 activity. Calcium/calmodulin-activated protein phosphatase calcineurin (PPP3CA) has been shown to directly dephosphorylate this site. SOCS1 binds to ASK1 by recognizing phosphorylation of Tyr-725 and induces MAP3K5/ASK1 degradation in endothelial cells. Also dephosphorylated and activated by PGAM5. Contains an N-terminal autoinhibitory domain. Its function is as follows. Serine/threonine kinase which acts as an essential component of the MAP kinase signal transduction pathway. Plays an important role in the cascades of cellular responses evoked by changes in the environment. Mediates signaling for determination of cell fate such as differentiation and survival. Plays a crucial role in the apoptosis signal transduction pathway through mitochondria-dependent caspase activation. MAP3K5/ASK1 is required for the innate immune response, which is essential for host defense against a wide range of pathogens. Mediates signal transduction of various stressors like oxidative stress as well as by receptor-mediated inflammatory signals, such as the tumor necrosis factor (TNF) or lipopolysaccharide (LPS). Once activated, acts as an upstream activator of the MKK/JNK signal transduction cascade and the p38 MAPK signal transduction cascade through the phosphorylation and activation of several MAP kinase kinases like MAP2K4/SEK1, MAP2K3/MKK3, MAP2K6/MKK6 and MAP2K7/MKK7. These MAP2Ks in turn activate p38 MAPKs and c-jun N-terminal kinases (JNKs). Both p38 MAPK and JNKs control the transcription factors activator protein-1 (AP-1). This is Mitogen-activated protein kinase kinase kinase 5 (Map3k5) from Mus musculus (Mouse).